Consider the following 591-residue polypeptide: Paxillin (591 aa).

M1 carries the post-translational modification N-acetylmethionine. An N-acetylserine modification is found at D2. The LD motif 1 signature appears at 3–15; it reads DLDALLADLESTT. Residues 17-138 are disordered; it reads HISKRPVFLS…PSPTVMSTSL (122 aa). Position 31 is a phosphotyrosine; by PTK6 (Y31). Positions 45 to 54 are enriched in pro residues; the sequence is VPPPVPPPPS. A compositionally biased stretch (polar residues) spans 69–106; it reads WQPSSSRFIHQQPQSSSPVYGSSAKTSSVSNPQDSVGS. Phosphoserine occurs at positions 83 and 85. At Y88 the chain carries Phosphotyrosine. A Phosphoserine modification is found at S106. A Phosphotyrosine; by PTK6 modification is found at Y118. S119, S126, and S130 each carry phosphoserine. The span at 121-137 shows a compositional bias: polar residues; it reads PNKQKSAEPSPTVMSTS. T132 carries the post-translational modification Phosphothreonine. A phosphoserine mark is found at S137, S140, and S143. The LD motif 2 motif lies at 144–156; sequence ELDRLLLELNAVQ. A disordered region spans residues 159–260; it reads PPGFPADEAN…TQQQTRISAS (102 aa). Y181 carries the post-translational modification Phosphotyrosine. The LD motif 3 motif lies at 216–228; it reads SVESLLDELESSV. A Phosphoserine modification is found at S230. The segment covering 236–260 has biased composition (polar residues); sequence TVNQGEMSSPQRVTSTQQQTRISAS. S244 carries the post-translational modification Phosphoserine; by CDK5. S250 carries the phosphoserine; by SLK modification. A phosphoserine mark is found at S258, S261, S272, S303, S322, S332, and S340. Positions 262 to 315 are required for binding to PARVA and ILK; that stretch reads ATRELDELMASLSDFKIQGLEQRADGERCWAAGWPRDGGRSSPGGQDEGGFMAQ. The LD motif 4 signature appears at 265 to 276; that stretch reads ELDELMASLSDF. The disordered stretch occupies residues 291–335; that stretch reads WAAGWPRDGGRSSPGGQDEGGFMAQGKTGSSSPPGGPPKPGSQLD. Residues 333 to 345 carry the LD motif 5 motif; it reads QLDSMLGSLQSDL. 4 LIM zinc-binding domains span residues 356–415, 416–473, 474–533, and 534–591; these read GVCG…LFSP, RCYY…DMFA, PKCG…RRGS, and LCSG…KLFC. Phosphoserine is present on S533.

This sequence belongs to the paxillin family. As to quaternary structure, interacts in vitro with VCL/vinculin as well as to the SH3 domain of SRC and, when tyrosine phosphorylated, to the SH2 domain of CRK. Interacts with GIT1. Interacts with NUDT16L1/SDOS. Interacts with PTK2/FAK1. Interacts with PTK2B/PYK2. Interacts with ASAP2. Interacts with unphosphorylated ITGA4. Interacts with RNF5. Interacts with PDCD10. Interacts with NEK3, the interaction is prolactin-dependent. Interacts with PTK6. Interacts with TGFB1I1. Interacts with SORBS1. Interacts with PARVB. Interacts (via LD motif 4) with PARVA/PARVIN. Interacts (via LD motif 4) with ILK. Interacts (via cytoplasmic domain) with CEACAM1; the interaction is phosphotyrosyl-dependent. Interacts with LIMA1; this complex stabilizes actin dynamics. Interacts with CD36 (via C-terminus). Interacts with TRIM15. Interacts with PAK4; PAK4 acts as a scaffold to suppport PAXI phosphorylation at Ser-272. Interacts strongly with PTK2/FAK1 and weakly with VCL/vinculin. In terms of assembly, interacts strongly with VCL/vinculin but only weakly with PTK2/FAK1. Post-translationally, phosphorylated by MAPK1/ERK2. Phosphorylated on tyrosine residues during integrin-mediated cell adhesion, embryonic development, fibroblast transformation and following stimulation of cells by mitogens. Phosphorylation at Ser-244 by CDK5 reduces its interaction with PTK2/FAK1 in matrix-cell focal adhesions (MCFA) during oligodendrocytes (OLs) differentiation. Phosphorylation at Tyr-31 and Tyr-118 by PTK6 promote the activation of RAC1 via CRK/CrKII, thereby promoting migration and invasion. Phosphorylation at Ser-250 by SLK is required for PXN redistribution and cell motility. Phosphorylation at Ser-272 promotes focal adhesion disassembly during cell migration.

The protein localises to the cytoplasm. It is found in the cytoskeleton. It localises to the cell junction. Its subcellular location is the focal adhesion. The protein resides in the cell cortex. Its function is as follows. Cytoskeletal protein involved in actin-membrane attachment at sites of cell adhesion to the extracellular matrix (focal adhesion). Recruits other proteins such as TRIM15 to focal adhesion. This Homo sapiens (Human) protein is Paxillin.